Here is a 41-residue protein sequence, read N- to C-terminus: Phospholipase A2 homolog nigroviriditoxin acidic subunit A (41 aa).

The protein belongs to the phospholipase A2 family. Group II subfamily. D49 sub-subfamily. Nigroviriditoxin is a heterodimer of an acidic subunit A and a basic subunit B. In terms of tissue distribution, expressed by the venom gland.

Its subcellular location is the secreted. Functionally, heterodimer A-B: Nigroviriditoxin possesses phospholipase A2 (PLA2) activity. It consists of a non-covalent association of a basic PLA2 subunit B with a non-enzymatic subunit A. In terms of biological role, subunit A: The acidic subunit of nigroviriditoxin probably is a heterotrimer of three disulfide-linked chains generated by post-translational maturation of a PLA2-like precursor. It appears to have no PLA2 activity of its own, instead inhibiting the catalytic activity of subunit B. It is not toxic to mice by itself but increases toxicity of subunit B. This Bothriechis nigroviridis (Black-speckled palm pit viper) protein is Phospholipase A2 homolog nigroviriditoxin acidic subunit A.